Consider the following 141-residue polypeptide: Large ribosomal subunit protein uL11 (141 aa).

The protein belongs to the universal ribosomal protein uL11 family. Part of the ribosomal stalk of the 50S ribosomal subunit. Interacts with L10 and the large rRNA to form the base of the stalk. L10 forms an elongated spine to which L12 dimers bind in a sequential fashion forming a multimeric L10(L12)X complex. One or more lysine residues are methylated.

Functionally, forms part of the ribosomal stalk which helps the ribosome interact with GTP-bound translation factors. The protein is Large ribosomal subunit protein uL11 of Chlorobaculum parvum (strain DSM 263 / NCIMB 8327) (Chlorobium vibrioforme subsp. thiosulfatophilum).